We begin with the raw amino-acid sequence, 218 residues long: Protein N-lysine methyltransferase METTL21A (218 aa).

S-adenosyl-L-methionine contacts are provided by residues W47, 73–75 (GAG), D94, W125, and A143.

Belongs to the methyltransferase superfamily. METTL21 family.

It is found in the cytoplasm. The catalysed reaction is L-lysyl-[protein] + 3 S-adenosyl-L-methionine = N(6),N(6),N(6)-trimethyl-L-lysyl-[protein] + 3 S-adenosyl-L-homocysteine + 3 H(+). Protein-lysine methyltransferase that selectively trimethylates residues in heat shock protein 70 (HSP70) family members. The sequence is that of Protein N-lysine methyltransferase METTL21A (mettl21a) from Danio rerio (Zebrafish).